The following is a 531-amino-acid chain: CTP synthase (531 aa).

The segment at 1 to 265 (MAKYIFITGG…DRIITERLNL (265 aa)) is amidoligase domain. Residue Ser-13 coordinates CTP. A UTP-binding site is contributed by Ser-13. Residue 14–19 (SLGKGI) coordinates ATP. Tyr-54 is an L-glutamine binding site. Asp-71 provides a ligand contact to ATP. Positions 71 and 139 each coordinate Mg(2+). Residues 146 to 148 (DIE), 186 to 191 (KTKPTQ), and Lys-222 each bind CTP. Residues 186 to 191 (KTKPTQ) and Lys-222 contribute to the UTP site. Residues 290-529 (NVALVGKYVE…IRACLEYKRK (240 aa)) form the Glutamine amidotransferase type-1 domain. Residue Gly-349 participates in L-glutamine binding. Residue Cys-376 is the Nucleophile; for glutamine hydrolysis of the active site. L-glutamine-binding positions include 377–380 (LGMQ), Glu-400, and Arg-457. Catalysis depends on residues His-502 and Glu-504.

The protein belongs to the CTP synthase family. In terms of assembly, homotetramer.

The catalysed reaction is UTP + L-glutamine + ATP + H2O = CTP + L-glutamate + ADP + phosphate + 2 H(+). The enzyme catalyses L-glutamine + H2O = L-glutamate + NH4(+). It catalyses the reaction UTP + NH4(+) + ATP = CTP + ADP + phosphate + 2 H(+). It functions in the pathway pyrimidine metabolism; CTP biosynthesis via de novo pathway; CTP from UDP: step 2/2. With respect to regulation, allosterically activated by GTP, when glutamine is the substrate; GTP has no effect on the reaction when ammonia is the substrate. The allosteric effector GTP functions by stabilizing the protein conformation that binds the tetrahedral intermediate(s) formed during glutamine hydrolysis. Inhibited by the product CTP, via allosteric rather than competitive inhibition. Functionally, catalyzes the ATP-dependent amination of UTP to CTP with either L-glutamine or ammonia as the source of nitrogen. Regulates intracellular CTP levels through interactions with the four ribonucleotide triphosphates. The protein is CTP synthase of Aquifex aeolicus (strain VF5).